The chain runs to 438 residues: Probable glucose-6-phosphate isomerase (438 aa).

E280 (proton donor) is an active-site residue. Active-site residues include H301 and K410.

It belongs to the GPI family.

The protein resides in the cytoplasm. The catalysed reaction is alpha-D-glucose 6-phosphate = beta-D-fructose 6-phosphate. It participates in carbohydrate biosynthesis; gluconeogenesis. The protein operates within carbohydrate degradation; glycolysis; D-glyceraldehyde 3-phosphate and glycerone phosphate from D-glucose: step 2/4. Its function is as follows. Catalyzes the reversible isomerization of glucose-6-phosphate to fructose-6-phosphate. This is Probable glucose-6-phosphate isomerase from Methanococcus maripaludis (strain DSM 14266 / JCM 13030 / NBRC 101832 / S2 / LL).